The primary structure comprises 630 residues: tRNA uridine 5-carboxymethylaminomethyl modification enzyme MnmG (630 aa).

FAD is bound at residue Gly-13–Gly-18. Gly-273–Phe-287 provides a ligand contact to NAD(+).

This sequence belongs to the MnmG family. As to quaternary structure, homodimer. Heterotetramer of two MnmE and two MnmG subunits. FAD is required as a cofactor.

The protein localises to the cytoplasm. Functionally, NAD-binding protein involved in the addition of a carboxymethylaminomethyl (cmnm) group at the wobble position (U34) of certain tRNAs, forming tRNA-cmnm(5)s(2)U34. The chain is tRNA uridine 5-carboxymethylaminomethyl modification enzyme MnmG from Pseudomonas putida (strain GB-1).